A 124-amino-acid polypeptide reads, in one-letter code: Insulin-like growth factor 1 (124 aa).

A propeptide spanning residues 1-19 (IHFFYLGLCLLTLTSSAAA) is cleaved from the precursor. A b region spans residues 20-48 (GPETLCGAELVDALQFVCGDRGFYFSKPT). Cystine bridges form between C25/C67, C37/C80, and C66/C71. The tract at residues 49–60 (GYGSSSRRLHHK) is c. The a stretch occupies residues 61–81 (GIVDECCFQSCDLRRLEMYCA). The segment at 82 to 89 (PIKPPKSA) is d. Residues 86–124 (PKSARSVRAQRHTDMPKAQKEVHLKNTSRGNTGNRNYRM) are disordered. Positions 90 to 124 (RSVRAQRHTDMPKAQKEVHLKNTSRGNTGNRNYRM) are cleaved as a propeptide — e peptide. Residues 96–109 (RHTDMPKAQKEVHL) are compositionally biased toward basic and acidic residues. A compositionally biased stretch (polar residues) spans 110-124 (KNTSRGNTGNRNYRM).

It belongs to the insulin family.

Its subcellular location is the secreted. Its function is as follows. The insulin-like growth factors, isolated from plasma, are structurally and functionally related to insulin but have a much higher growth-promoting activity. Acts as a ligand for IGF1R. Binds to the alpha subunit of IGF1R, leading to the activation of the intrinsic tyrosine kinase activity which autophosphorylates tyrosine residues in the beta subunit thus initiatiating a cascade of down-stream signaling events leading to activation of the PI3K-AKT/PKB and the Ras-MAPK pathways. Binds to integrins. Its binding to integrins and subsequent ternary complex formation with integrins and IGFR1 are essential for IGF1 signaling. The polypeptide is Insulin-like growth factor 1 (Coturnix japonica (Japanese quail)).